We begin with the raw amino-acid sequence, 649 residues long: Acetyl-coenzyme A synthetase (649 aa).

CoA is bound by residues 190-193 and Thr310; that span reads RGGR. Residues 386 to 388, 410 to 415, Asp499, and Arg514 each bind ATP; these read GEP and DTWWQT. Ser522 lines the CoA pocket. Arg525 contributes to the ATP binding site. 3 residues coordinate Mg(2+): Val536, His538, and Val541. Arg583 contacts CoA. At Lys608 the chain carries N6-acetyllysine.

It belongs to the ATP-dependent AMP-binding enzyme family. It depends on Mg(2+) as a cofactor. In terms of processing, acetylated. Deacetylation by the SIR2-homolog deacetylase activates the enzyme.

The enzyme catalyses acetate + ATP + CoA = acetyl-CoA + AMP + diphosphate. In terms of biological role, catalyzes the conversion of acetate into acetyl-CoA (AcCoA), an essential intermediate at the junction of anabolic and catabolic pathways. AcsA undergoes a two-step reaction. In the first half reaction, AcsA combines acetate with ATP to form acetyl-adenylate (AcAMP) intermediate. In the second half reaction, it can then transfer the acetyl group from AcAMP to the sulfhydryl group of CoA, forming the product AcCoA. This Methylorubrum populi (strain ATCC BAA-705 / NCIMB 13946 / BJ001) (Methylobacterium populi) protein is Acetyl-coenzyme A synthetase.